We begin with the raw amino-acid sequence, 357 residues long: UDP-N-acetylglucosamine--N-acetylmuramyl-(pentapeptide) pyrophosphoryl-undecaprenol N-acetylglucosamine transferase (357 aa).

UDP-N-acetyl-alpha-D-glucosamine contacts are provided by residues 11-13, Asn-120, Arg-161, Ser-188, and Gln-281; that span reads TGG.

It belongs to the glycosyltransferase 28 family. MurG subfamily.

Its subcellular location is the cell inner membrane. It carries out the reaction di-trans,octa-cis-undecaprenyl diphospho-N-acetyl-alpha-D-muramoyl-L-alanyl-D-glutamyl-meso-2,6-diaminopimeloyl-D-alanyl-D-alanine + UDP-N-acetyl-alpha-D-glucosamine = di-trans,octa-cis-undecaprenyl diphospho-[N-acetyl-alpha-D-glucosaminyl-(1-&gt;4)]-N-acetyl-alpha-D-muramoyl-L-alanyl-D-glutamyl-meso-2,6-diaminopimeloyl-D-alanyl-D-alanine + UDP + H(+). The protein operates within cell wall biogenesis; peptidoglycan biosynthesis. Functionally, cell wall formation. Catalyzes the transfer of a GlcNAc subunit on undecaprenyl-pyrophosphoryl-MurNAc-pentapeptide (lipid intermediate I) to form undecaprenyl-pyrophosphoryl-MurNAc-(pentapeptide)GlcNAc (lipid intermediate II). In Prochlorococcus marinus (strain SARG / CCMP1375 / SS120), this protein is UDP-N-acetylglucosamine--N-acetylmuramyl-(pentapeptide) pyrophosphoryl-undecaprenol N-acetylglucosamine transferase.